A 144-amino-acid polypeptide reads, in one-letter code: uncharacterized protein (144 aa).

The tract at residues 98-127 is disordered; the sequence is PLADGATVDSQASENGEKEAQPTPPKEGLL.

This is an uncharacterized protein from Aedes vexans (Inland floodwater mosquito).